The sequence spans 402 residues: Bisdemethoxycurcumin synthase (402 aa).

The active-site Acyl-thioester intermediate is C174.

Belongs to the thiolase-like superfamily. Chalcone/stilbene synthases family. As to quaternary structure, homodimer.

It catalyses the reaction 2 4-coumaroyl-CoA + malonyl-CoA + H2O + H(+) = bisdemethoxycurcumin + 2 CO2 + 3 CoA. It functions in the pathway secondary metabolite biosynthesis; flavonoid biosynthesis. Plant-specific type III polyketide synthase (PKS) that catalyzes the one-pot formation of the C6-C7-C6 diarylheptanoid scaffold of bisdemethoxycurcumin by the condensation of two molecules of 4-coumaroyl-CoA and one molecule of malonyl-CoA. This Oryza sativa subsp. japonica (Rice) protein is Bisdemethoxycurcumin synthase.